We begin with the raw amino-acid sequence, 275 residues long: Release factor glutamine methyltransferase (275 aa).

S-adenosyl-L-methionine is bound by residues 114–118, D137, W165, and N180; that span reads GTGSG. 180 to 183 contacts substrate; it reads NPPY.

The protein belongs to the protein N5-glutamine methyltransferase family. PrmC subfamily.

It carries out the reaction L-glutaminyl-[peptide chain release factor] + S-adenosyl-L-methionine = N(5)-methyl-L-glutaminyl-[peptide chain release factor] + S-adenosyl-L-homocysteine + H(+). Functionally, methylates the class 1 translation termination release factors RF1/PrfA and RF2/PrfB on the glutamine residue of the universally conserved GGQ motif. The chain is Release factor glutamine methyltransferase from Xylella fastidiosa (strain 9a5c).